Consider the following 183-residue polypeptide: NEDD8-conjugating enzyme Ubc12 (183 aa).

At M1 the chain carries N-acetylmethionine. A disordered region spans residues 1 to 28; it reads MIKLFSLKQQKKEEESAGGTKGSSKKAS. Residues 29–173 form the UBC core domain; the sequence is AAQLRIQKDI…VQRSMRGGYI (145 aa). C111 (glycyl thioester intermediate) is an active-site residue.

Belongs to the ubiquitin-conjugating enzyme family. UBC12 subfamily. Post-translationally, the acetylation of Met-1 increases affinity for DCUN1D1 by about 2 orders of magnitude and is crucial for NEDD8 transfer to cullins.

It catalyses the reaction [E1 NEDD8-activating enzyme]-S-[NEDD8 protein]-yl-L-cysteine + [E2 NEDD8-conjugating enzyme]-L-cysteine = [E1 NEDD8-activating enzyme]-L-cysteine + [E2 NEDD8-conjugating enzyme]-S-[NEDD8-protein]-yl-L-cysteine.. Its pathway is protein modification; protein neddylation. Accepts the ubiquitin-like protein NEDD8 from the UBA3-NAE1 E1 complex and catalyzes its covalent attachment to other proteins. The specific interaction with the E3 ubiquitin ligase rbx1, but not rbx2, suggests that the rbx1-ube2m complex neddylates specific target proteins, such as cul1, cul2, cul3 and cul4. Involved in cell proliferation. This chain is NEDD8-conjugating enzyme Ubc12 (ube2m), found in Xenopus laevis (African clawed frog).